The primary structure comprises 226 residues: V-type proton ATPase subunit E 2 (226 aa).

This sequence belongs to the V-ATPase E subunit family. V-ATPase is a heteromultimeric enzyme made up of two complexes: the ATP-hydrolytic V1 complex and the proton translocation V0 complex. The V1 complex consists of three catalytic AB heterodimers that form a heterohexamer, three peripheral stalks each consisting of EG heterodimers, one central rotor including subunits D and F, and the regulatory subunits C and H. The proton translocation complex V0 consists of the proton transport subunit a, a ring of proteolipid subunits c9c'', rotary subunit d, subunits e and f, and the accessory subunits ATP6AP1/Ac45 and ATP6AP2/PRR. In terms of tissue distribution, testis specific.

Functionally, subunit of the V1 complex of vacuolar(H+)-ATPase (V-ATPase), a multisubunit enzyme composed of a peripheral complex (V1) that hydrolyzes ATP and a membrane integral complex (V0) that translocates protons. V-ATPase is responsible for acidifying and maintaining the pH of intracellular compartments and in some cell types, is targeted to the plasma membrane, where it is responsible for acidifying the extracellular environment. The protein is V-type proton ATPase subunit E 2 (Atp6v1e2) of Mus musculus (Mouse).